The following is a 483-amino-acid chain: MLHIYNTLSRTKETFKPVHAGEVRIYVCGMTVYDYCHLGHARMLVAFDVVQRWLRASGYAVNYVRNITDIDDKIIRRAVQTGRRMHEVTDYFIAAMHADERALAVERPDHEPRATAYVGEMIDIIGRLEKNGLAYQADDGDVNYAVRGFQGYGKLSGKSLDDLRAGERVAVGSSKRDPLDFVLWKSAKEEEPPETKWDSPYGFGRPGWHIECSAMSKSLLGLPLDIHGGGPDLKFPHHENEIAQTEGAFGGTLANIWMHCGPLMVDAEKMSKSLGNFRTIRQTIAQGEAQDGEADYQANPREAEMLRFFIVRNHYRSPQNYTPDNLVDAQNALDRLYQALANVTPDVAGIDWNEAQAQAFKAAMNDDFNSSGAVAALFELAGQVNRERDSRAAGQLKALGAVLGLLQQDPAVYFQSSTRYSSAGMQQGASQMDAARIEALIAERGQAKLSRDFARADAIRAELRAAGIELDDKPGGMTQWRRA.

Cys-28 is a Zn(2+) binding site. Positions 30-40 match the 'HIGH' region motif; that stretch reads MTVYDYCHLGH. Zn(2+) contacts are provided by Cys-212, His-237, and Glu-241. Residues 269–273 carry the 'KMSKS' region motif; it reads KMSKS. Position 272 (Lys-272) interacts with ATP.

This sequence belongs to the class-I aminoacyl-tRNA synthetase family. In terms of assembly, monomer. It depends on Zn(2+) as a cofactor.

It is found in the cytoplasm. It catalyses the reaction tRNA(Cys) + L-cysteine + ATP = L-cysteinyl-tRNA(Cys) + AMP + diphosphate. This Bordetella avium (strain 197N) protein is Cysteine--tRNA ligase.